A 545-amino-acid polypeptide reads, in one-letter code: Glucose-6-phosphate isomerase (545 aa).

Glu351 serves as the catalytic Proton donor. Active-site residues include His382 and Lys510.

Belongs to the GPI family.

The protein resides in the cytoplasm. It carries out the reaction alpha-D-glucose 6-phosphate = beta-D-fructose 6-phosphate. Its pathway is carbohydrate biosynthesis; gluconeogenesis. The protein operates within carbohydrate degradation; glycolysis; D-glyceraldehyde 3-phosphate and glycerone phosphate from D-glucose: step 2/4. In terms of biological role, catalyzes the reversible isomerization of glucose-6-phosphate to fructose-6-phosphate. In Shewanella denitrificans (strain OS217 / ATCC BAA-1090 / DSM 15013), this protein is Glucose-6-phosphate isomerase.